Reading from the N-terminus, the 400-residue chain is Enoyl-[acyl-carrier-protein] reductase [NADH] 1 (400 aa).

NAD(+) contacts are provided by residues 48-53, 74-75, 111-112, and 139-140; these read GSSSGY, FE, DA, and LA. A substrate-binding site is contributed by Tyr225. Tyr235 (proton donor) is an active-site residue. NAD(+)-binding positions include Lys244 and 273-275; that span reads VVT.

The protein belongs to the TER reductase family. In terms of assembly, monomer.

The enzyme catalyses a 2,3-saturated acyl-[ACP] + NAD(+) = a (2E)-enoyl-[ACP] + NADH + H(+). It functions in the pathway lipid metabolism; fatty acid biosynthesis. In terms of biological role, involved in the final reduction of the elongation cycle of fatty acid synthesis (FAS II). Catalyzes the reduction of a carbon-carbon double bond in an enoyl moiety that is covalently linked to an acyl carrier protein (ACP). The sequence is that of Enoyl-[acyl-carrier-protein] reductase [NADH] 1 from Photobacterium profundum (strain SS9).